A 258-amino-acid chain; its full sequence is Hydroxyethylthiazole kinase (258 aa).

Methionine 37 lines the substrate pocket. Arginine 112 and threonine 158 together coordinate ATP. Alanine 185 lines the substrate pocket.

Belongs to the Thz kinase family. The cofactor is Mg(2+).

It catalyses the reaction 5-(2-hydroxyethyl)-4-methylthiazole + ATP = 4-methyl-5-(2-phosphooxyethyl)-thiazole + ADP + H(+). It participates in cofactor biosynthesis; thiamine diphosphate biosynthesis; 4-methyl-5-(2-phosphoethyl)-thiazole from 5-(2-hydroxyethyl)-4-methylthiazole: step 1/1. Functionally, catalyzes the phosphorylation of the hydroxyl group of 4-methyl-5-beta-hydroxyethylthiazole (THZ). In Rhizobium etli (strain ATCC 51251 / DSM 11541 / JCM 21823 / NBRC 15573 / CFN 42), this protein is Hydroxyethylthiazole kinase.